We begin with the raw amino-acid sequence, 370 residues long: Coproporphyrin III ferrochelatase (370 aa).

Positions 58 and 127 each coordinate Fe-coproporphyrin III. Fe(2+)-binding residues include His-189 and Glu-276.

It belongs to the ferrochelatase family.

The protein localises to the cytoplasm. It carries out the reaction Fe-coproporphyrin III + 2 H(+) = coproporphyrin III + Fe(2+). Its pathway is porphyrin-containing compound metabolism; protoheme biosynthesis. In terms of biological role, involved in coproporphyrin-dependent heme b biosynthesis. Catalyzes the insertion of ferrous iron into coproporphyrin III to form Fe-coproporphyrin III. The polypeptide is Coproporphyrin III ferrochelatase (Corynebacterium glutamicum (strain R)).